The primary structure comprises 212 residues: Orotate phosphoribosyltransferase (212 aa).

5-phospho-alpha-D-ribose 1-diphosphate contacts are provided by residues arginine 95, lysine 99, histidine 101, and aspartate 121 to serine 129. Position 125 (threonine 125) interacts with orotate.

It belongs to the purine/pyrimidine phosphoribosyltransferase family. PyrE subfamily. As to quaternary structure, homodimer. Mg(2+) is required as a cofactor.

The catalysed reaction is orotidine 5'-phosphate + diphosphate = orotate + 5-phospho-alpha-D-ribose 1-diphosphate. The protein operates within pyrimidine metabolism; UMP biosynthesis via de novo pathway; UMP from orotate: step 1/2. In terms of biological role, catalyzes the transfer of a ribosyl phosphate group from 5-phosphoribose 1-diphosphate to orotate, leading to the formation of orotidine monophosphate (OMP). This chain is Orotate phosphoribosyltransferase, found in Lactobacillus johnsonii (strain CNCM I-12250 / La1 / NCC 533).